The chain runs to 354 residues: Putative [LysW]-L-2-aminoadipate/[LysW]-L-glutamate phosphate reductase (354 aa).

NADP(+) is bound by residues 10-13 (SGVI) and 34-36 (SRR). C153 is an active-site residue. N321 lines the NADP(+) pocket.

The protein belongs to the NAGSA dehydrogenase family. Type 1 subfamily. LysY sub-subfamily.

It is found in the cytoplasm. The enzyme catalyses [amino-group carrier protein]-C-terminal-N-(1-carboxy-5-oxopentan-1-yl)-L-glutamine + phosphate + NADP(+) = [amino-group carrier protein]-C-terminal-N-(1-carboxy-5-phosphooxy-5-oxopentan-1-yl)-L-glutamine + NADPH + H(+). The catalysed reaction is [amino-group carrier protein]-C-terminal-gamma-(L-glutamyl-5-semialdehyde)-L-glutamate + phosphate + NADP(+) = [amino-group carrier protein]-C-terminal-gamma-(5-phospho-L-glutamyl)-L-glutamate + NADPH + H(+). Its pathway is amino-acid biosynthesis; L-lysine biosynthesis via AAA pathway; L-lysine from L-alpha-aminoadipate (Thermus route): step 3/5. It participates in amino-acid biosynthesis; L-arginine biosynthesis. Its function is as follows. Involved in both the arginine and lysine biosynthetic pathways. In Caldivirga maquilingensis (strain ATCC 700844 / DSM 13496 / JCM 10307 / IC-167), this protein is Putative [LysW]-L-2-aminoadipate/[LysW]-L-glutamate phosphate reductase.